Consider the following 144-residue polypeptide: Flagellar assembly factor FliW (144 aa).

Belongs to the FliW family. Monomer. One copy interacts with the each alpha-helical wing of the CsrA homodimer, yielding a FliW-CsrA(2)-FliW complex. Comparison with a CsrA-mRNA structure (2JPP) suggests CsrA cannot bind both mRNA and FliW at the same time. Interacts with flagellin.

Its subcellular location is the cytoplasm. Functionally, acts as an anti-CsrA protein, binds CsrA and prevents it from repressing translation of its target genes, one of which is flagellin. Binds to flagellin and participates in the assembly of the flagellum. In terms of biological role, allosterically inhibits CsrA binding to mRNA in a non-competitive fashion by preventing CsrA binding to the 5'-UTR. The chain is Flagellar assembly factor FliW from Geobacillus thermodenitrificans (strain NG80-2).